Consider the following 212-residue polypeptide: Phosphatidylserine decarboxylase proenzyme (212 aa).

The active-site Schiff-base intermediate with substrate; via pyruvic acid is the Ser182. Ser182 bears the Pyruvic acid (Ser); by autocatalysis mark.

Belongs to the phosphatidylserine decarboxylase family. PSD-A subfamily. In terms of assembly, heterodimer of a large membrane-associated beta subunit and a small pyruvoyl-containing alpha subunit. It depends on pyruvate as a cofactor. In terms of processing, is synthesized initially as an inactive proenzyme. Formation of the active enzyme involves a self-maturation process in which the active site pyruvoyl group is generated from an internal serine residue via an autocatalytic post-translational modification. Two non-identical subunits are generated from the proenzyme in this reaction, and the pyruvate is formed at the N-terminus of the alpha chain, which is derived from the carboxyl end of the proenzyme. The post-translation cleavage follows an unusual pathway, termed non-hydrolytic serinolysis, in which the side chain hydroxyl group of the serine supplies its oxygen atom to form the C-terminus of the beta chain, while the remainder of the serine residue undergoes an oxidative deamination to produce ammonia and the pyruvoyl prosthetic group on the alpha chain.

The protein resides in the cell membrane. The enzyme catalyses a 1,2-diacyl-sn-glycero-3-phospho-L-serine + H(+) = a 1,2-diacyl-sn-glycero-3-phosphoethanolamine + CO2. It participates in phospholipid metabolism; phosphatidylethanolamine biosynthesis; phosphatidylethanolamine from CDP-diacylglycerol: step 2/2. Catalyzes the formation of phosphatidylethanolamine (PtdEtn) from phosphatidylserine (PtdSer). The chain is Phosphatidylserine decarboxylase proenzyme from Chlorobium luteolum (strain DSM 273 / BCRC 81028 / 2530) (Pelodictyon luteolum).